A 66-amino-acid chain; its full sequence is Large ribosomal subunit protein bL33c (66 aa).

The protein belongs to the bacterial ribosomal protein bL33 family.

The protein localises to the plastid. Its subcellular location is the chloroplast. This Aethionema grandiflorum (Persian stone-cress) protein is Large ribosomal subunit protein bL33c.